The chain runs to 1085 residues: DNA repair and recombination protein RAD26 (1085 aa).

Serine 30 carries the phosphoserine modification. Disordered regions lie at residues 118–141 (KEQV…GETE) and 190–219 (NLTD…EEND). A compositionally biased stretch (basic and acidic residues) spans 128-141 (KGSKEGLQRPGETE). Over residues 210 to 219 (SEDDEEEEND) the composition is skewed to acidic residues. Residues 309–518 (YELYQQNCGG…WSLFDFIFPG (210 aa)) enclose the Helicase ATP-binding domain. 322 to 329 (DEMGLGKT) contributes to the ATP binding site. Residues 469–472 (DEGH) carry the DEGH box motif. The Helicase C-terminal domain occupies 655–818 (VVKQLLLLWH…KRFFKIHELH (164 aa)).

The protein belongs to the SNF2/RAD54 helicase family.

Its subcellular location is the nucleus. The catalysed reaction is ATP + H2O = ADP + phosphate + H(+). Its function is as follows. May be involved in the preferential repair of active genes. This Saccharomyces cerevisiae (strain ATCC 204508 / S288c) (Baker's yeast) protein is DNA repair and recombination protein RAD26 (RAD26).